Here is a 630-residue protein sequence, read N- to C-terminus: Tyrosinase (630 aa).

Cu cation contacts are provided by H69, H92, H101, H317, H321, and H360. Positions 90–92 (CVH) form a cross-link, 2'-(S-cysteinyl)-histidine (Cys-His).

It belongs to the tyrosinase family. Cu(2+) is required as a cofactor.

It catalyses the reaction 2 L-dopa + O2 = 2 L-dopaquinone + 2 H2O. It carries out the reaction L-tyrosine + O2 = L-dopaquinone + H2O. Its function is as follows. This is a copper-containing oxidase that functions in the formation of pigments such as melanins and other polyphenolic compounds. This Aspergillus fumigatus (strain ATCC MYA-4609 / CBS 101355 / FGSC A1100 / Af293) (Neosartorya fumigata) protein is Tyrosinase (tyr1).